The primary structure comprises 361 residues: Free fatty acid receptor 4 (361 aa).

Residues 1–21 (MSPECAQTTGPGPSRTPDQVN) form a disordered region. The Extracellular portion of the chain corresponds to 1–45 (MSPECAQTTGPGPSRTPDQVNRTHFPFFSDVKGDHRLVLSVLETT). Residue Asn-21 is glycosylated (N-linked (GlcNAc...) asparagine). The helical transmembrane segment at 46 to 66 (VLGLIFVVSLLGNVCALVLVV) threads the bilayer. The Cytoplasmic segment spans residues 67 to 77 (RRRRRGATVSL). The helical transmembrane segment at 78-98 (VLNLFCADLLFTSAIPLVLVV) threads the bilayer. The Extracellular segment spans residues 99 to 103 (RWTEA). A helical transmembrane segment spans residues 104-124 (WLLGPVVCHLLFYVMTMSGSV). A disulfide bond links Cys-111 and Cys-194. Topologically, residues 125–156 (TILTLAAVSLERMVCIVRLRRGLSGPGRRTQA) are cytoplasmic. A helical membrane pass occupies residues 157–177 (ALLAFIWGYSALAALPLCILF). At 178–204 (RVVPQRLPGGDQEIPICTLDWPNRIGE) the chain is on the extracellular side. A helical membrane pass occupies residues 205–225 (ISWDVFFVTLNFLVPGLVIVI). At 226 to 268 (SYSKILQITKASRKRLTLSLAYSESHQIRVSQQDYRLFRTLFL) the chain is on the cytoplasmic side. The helical transmembrane segment at 269-289 (LMVSFFIMWSPIIITILLILI) threads the bilayer. At 290–295 (QNFRQD) the chain is on the extracellular side. Residues 296–316 (LVIWPSLFFWVVAFTFANSAL) form a helical membrane-spanning segment. Residues 317-361 (NPILYNMSLFRSEWRKIFCCFFFPEKGAIFTETSIRRNDLSVIST) lie on the Cytoplasmic side of the membrane. Residues Thr-347 and Thr-349 each carry the phosphothreonine modification. 3 positions are modified to phosphoserine: Ser-350, Ser-357, and Ser-360.

The protein belongs to the G-protein coupled receptor 1 family. In terms of assembly, interacts (via C-terminus) with ARRB2 following LCFAs stimulation. Post-translationally, phosphorylated at two clusters of Ser and Thr residues located in the intracellular C-terminus. Prerequisite for FFAR4 internalization via an ARRB2-dependent pathway.

Its subcellular location is the cell membrane. The protein resides in the endosome membrane. It is found in the lysosome membrane. It localises to the cell projection. The protein localises to the cilium membrane. In terms of biological role, G-protein-coupled receptor for long-chain fatty acids (LCFAs) with a major role in adipogenesis, energy metabolism and inflammation. Signals via G-protein and beta-arrestin pathways. LCFAs sensing initiates activation of phosphoinositidase C-linked G proteins GNAQ and GNA11 (G(q)/G(11)), inducing a variety of cellular responses via second messenger pathways such as intracellular calcium mobilization, modulation of cyclic adenosine monophosphate (cAMP) production, and mitogen-activated protein kinases (MAPKs). After LCFAs binding, associates with beta-arrestin ARRB2 that acts as an adapter protein coupling the receptor to specific downstream signaling pathways, as well as mediating receptor endocytosis. In response to dietary fats, plays an important role in the regulation of adipocyte proliferation and differentiation. Acts as a receptor for omega-3 polyunsaturated fatty acids (PUFAs) at primary cilium of perivascular preadipocytes, initiating an adipogenic program via cAMP and CTCF-dependent chromatin remodeling that ultimately results in transcriptional activation of adipogenic genes and cell cycle entry. Induces differentiation of brown and beige adipocytes probably via autocrine and endocrine functions of FGF21 hormone. Contributes to the thermogenic activation of brown adipose tissue and the browning of white adipose tissue. Activates brown adipocytes by initiating intracellular calcium signaling leading to mitochondrial depolarization and fission, and overall increased mitochondrial respiration. Consequently stimulates fatty acid uptake and oxidation in mitochondria together with UCP1-mediated thermogenic respiration, eventually reducing fat mass. Regulates bi-potential differentiation of bone marrow mesenchymal stem cells toward osteoblasts or adipocytes likely by up-regulating distinct integrins. In response to dietary fats regulates hormone secretion and appetite. Stimulates GIP and GLP1 secretion from enteroendocrine cells as well as GCG secretion in pancreatic alpha cells, thereby playing a role in the regulation of blood glucose levels. Negatively regulates glucose-induced SST secretion in pancreatic delta cells. Mediates LCFAs inhibition of GHRL secretion, an appetite-controlling hormone. In taste buds, contributes to sensing of dietary fatty acids by the gustatory system. During the inflammatory response, promotes anti-inflammatory M2 macrophage differentiation in adipose tissue. Mediates the anti-inflammatory effects of omega-3 PUFAs via inhibition of NLRP3 inflammasome activation. In this pathway, interacts with adapter protein ARRB2 and inhibits the priming step triggered by Toll-like receptors (TLRs) at the level of TAK1 and TAB1. Further inhibits the activation step when ARRB2 directly associates with NLRP3, leading to inhibition of pro-inflammatory cytokine release. Mediates LCFAs anti-apoptotic effects. The protein is Free fatty acid receptor 4 (Ffar4) of Rattus norvegicus (Rat).